Reading from the N-terminus, the 1845-residue chain is Helicase swr-1 (1845 aa).

A compositionally biased stretch (polar residues) spans 1–13 (MTTMMTDSGTASD). The tract at residues 1–329 (MTTMMTDSGT…GASRATPRIK (329 aa)) is disordered. Over residues 24 to 38 (NDTTTTTTTTTTPGD) the composition is skewed to low complexity. The span at 63–84 (SKSYSSTHHVPAIDNTSTTNAN) shows a compositional bias: polar residues. The segment covering 98-108 (SPLSSISSPLS) has biased composition (low complexity). Over residues 168–180 (PKPESPPWKKFEA) the composition is skewed to basic and acidic residues. The segment covering 216–243 (AIQTSPVSNKSSASTSRKPAPASSSNSK) has biased composition (polar residues). 2 stretches are compositionally biased toward pro residues: residues 248-258 (KMPPPPPPPKA) and 283-292 (PRRPATPPKP). The HSA domain maps to 418 to 493 (PEAEEEPPRQ…EMEASKAKWR (76 aa)). 2 disordered regions span residues 539-713 (QKLQ…LFFG) and 749-935 (ELQV…TVKT). Positions 549-565 (DGDEITDEDEDEDDEDL) are enriched in acidic residues. Basic and acidic residues predominate over residues 574 to 585 (GDEKESDEHSDQ). Composition is skewed to acidic residues over residues 586 to 608 (GSDEMSDENDEDEDEDNMSSSED) and 663 to 704 (NDDD…DDEP). Polar residues-rich tracts occupy residues 762–777 (TNGTHTNEQLASSQTE) and 815–834 (TNDSSLKYPNEIVQSENQTL). Over residues 888 to 897 (SQSQTQSPKT) the composition is skewed to low complexity. Residues 898–909 (TDTKPTDVDTPH) are compositionally biased toward basic and acidic residues. A compositionally biased stretch (polar residues) spans 922–933 (RQSSPQPTTPTV). Residues 957-1122 (AGLYANNTNG…WSLLYFLAPP (166 aa)) form the Helicase ATP-binding domain. 970–977 (DEMGLGKT) provides a ligand contact to ATP. Residues 1073 to 1076 (DEAH) carry the DEAH box motif. The Helicase C-terminal domain maps to 1510-1660 (ALDKLLRKLQ…DVVIQEGEFT (151 aa)). Disordered stretches follow at residues 1702-1724 (TTGAGGYDGTADGGGGASQPPVR), 1751-1783 (QDEADFGEAGSTRPGTPGDGLADLDGQLLGGEE), and 1816-1845 (LEGTPLELPRDRKKGRDRNRNRKGKDSRKR). Positions 1704 to 1718 (GAGGYDGTADGGGGA) are enriched in gly residues. Low complexity predominate over residues 1769–1781 (DGLADLDGQLLGG). Residues 1826 to 1845 (DRKKGRDRNRNRKGKDSRKR) show a composition bias toward basic residues.

This sequence belongs to the SNF2/RAD54 helicase family. SWR1 subfamily. Component of the SWR1 chromatin-remodeling complex.

Its subcellular location is the nucleus. It carries out the reaction ATP + H2O = ADP + phosphate + H(+). Catalytic component of the SWR1 complex which mediates the ATP-dependent exchange of histone H2A for the H2A variant H2A.Z leading to transcriptional regulation of selected genes by chromatin remodeling. The protein is Helicase swr-1 (crf1-1) of Neurospora crassa (strain ATCC 24698 / 74-OR23-1A / CBS 708.71 / DSM 1257 / FGSC 987).